We begin with the raw amino-acid sequence, 142 residues long: Large ribosomal subunit protein uL13 (142 aa).

This sequence belongs to the universal ribosomal protein uL13 family. As to quaternary structure, part of the 50S ribosomal subunit.

Functionally, this protein is one of the early assembly proteins of the 50S ribosomal subunit, although it is not seen to bind rRNA by itself. It is important during the early stages of 50S assembly. The sequence is that of Large ribosomal subunit protein uL13 from Mannheimia succiniciproducens (strain KCTC 0769BP / MBEL55E).